We begin with the raw amino-acid sequence, 644 residues long: Phosphomethylpyrimidine synthase (644 aa).

Residues Asn-236, Met-265, Tyr-294, His-330, 350-352, 391-394, and Glu-430 contribute to the substrate site; these read SRG and DGLR. His-434 serves as a coordination point for Zn(2+). Residue Tyr-457 coordinates substrate. His-498 lines the Zn(2+) pocket. Residues Cys-578, Cys-581, and Cys-586 each contribute to the [4Fe-4S] cluster site. The segment at 623-644 is disordered; sequence RQKSEEFKASGSELYHPAVEAE.

The protein belongs to the ThiC family. In terms of assembly, homodimer. Requires [4Fe-4S] cluster as cofactor.

It catalyses the reaction 5-amino-1-(5-phospho-beta-D-ribosyl)imidazole + S-adenosyl-L-methionine = 4-amino-2-methyl-5-(phosphooxymethyl)pyrimidine + CO + 5'-deoxyadenosine + formate + L-methionine + 3 H(+). It participates in cofactor biosynthesis; thiamine diphosphate biosynthesis. In terms of biological role, catalyzes the synthesis of the hydroxymethylpyrimidine phosphate (HMP-P) moiety of thiamine from aminoimidazole ribotide (AIR) in a radical S-adenosyl-L-methionine (SAM)-dependent reaction. This chain is Phosphomethylpyrimidine synthase, found in Aliivibrio fischeri (strain MJ11) (Vibrio fischeri).